The following is a 417-amino-acid chain: Glucose-1-phosphate adenylyltransferase (417 aa).

Alpha-D-glucose 1-phosphate is bound by residues Tyr-105, Gly-170, Glu-185–Lys-186, and Ser-203.

Belongs to the bacterial/plant glucose-1-phosphate adenylyltransferase family. In terms of assembly, homotetramer.

It catalyses the reaction alpha-D-glucose 1-phosphate + ATP + H(+) = ADP-alpha-D-glucose + diphosphate. It participates in glycan biosynthesis; glycogen biosynthesis. In terms of biological role, involved in the biosynthesis of ADP-glucose, a building block required for the elongation reactions to produce glycogen. Catalyzes the reaction between ATP and alpha-D-glucose 1-phosphate (G1P) to produce pyrophosphate and ADP-Glc. In Granulibacter bethesdensis (strain ATCC BAA-1260 / CGDNIH1), this protein is Glucose-1-phosphate adenylyltransferase.